The sequence spans 66 residues: Large ribosomal subunit protein uL29 (66 aa).

This sequence belongs to the universal ribosomal protein uL29 family.

The polypeptide is Large ribosomal subunit protein uL29 (Bacillus licheniformis (strain ATCC 14580 / DSM 13 / JCM 2505 / CCUG 7422 / NBRC 12200 / NCIMB 9375 / NCTC 10341 / NRRL NRS-1264 / Gibson 46)).